The sequence spans 183 residues: Der GTPase-activating protein YihI (183 aa).

Residues 1–18 (MNQPSKAPRAPRSSAATP) show a composition bias toward low complexity. The segment at 1-114 (MNQPSKAPRA…EEELAKLEND (114 aa)) is disordered. Residues 25 to 34 (RAELDQEARE) show a composition bias toward basic and acidic residues. Low complexity predominate over residues 56–65 (NQKNKAAAQA). Basic and acidic residues predominate over residues 92–114 (PKAEAKPKPRLTPEEELAKLEND).

It belongs to the YihI family. Interacts with Der.

A GTPase-activating protein (GAP) that modifies Der/EngA GTPase function. May play a role in ribosome biogenesis. This is Der GTPase-activating protein YihI from Serratia proteamaculans (strain 568).